A 401-amino-acid chain; its full sequence is uncharacterized protein (401 aa).

Position 242 is an N6-(pyridoxal phosphate)lysine (K242).

The protein belongs to the class-I pyridoxal-phosphate-dependent aminotransferase family. Homodimer. The cofactor is pyridoxal 5'-phosphate.

The protein resides in the cytoplasm. This is an uncharacterized protein from Saccharolobus solfataricus (strain ATCC 35092 / DSM 1617 / JCM 11322 / P2) (Sulfolobus solfataricus).